The following is a 649-amino-acid chain: Phospholipase A1 PLIP1, chloroplastic (649 aa).

The N-terminal 67 residues, 1–67, are a transit peptide targeting the chloroplast; it reads MAFNTAMAST…NNRILAVSVR (67 aa). Positions 420–424 match the GXSXG motif; sequence GHSLG. Residue Ser422 is the Acyl-ester intermediate of the active site. Residues Asp483 and His593 each act as charge relay system in the active site.

The protein belongs to the AB hydrolase superfamily. Lipase family.

It is found in the plastid. It localises to the chloroplast thylakoid membrane. The enzyme catalyses a 1,2-diacyl-sn-glycero-3-phosphocholine + H2O = a 2-acyl-sn-glycero-3-phosphocholine + a fatty acid + H(+). It catalyses the reaction a 1,2-diacyl-3-O-(beta-D-galactosyl)-sn-glycerol + 2 H2O = 3-beta-D-galactosyl-sn-glycerol + 2 a fatty acid + 2 H(+). In terms of biological role, sn-1-specific phospholipase A1 involved in seed oil biosynthesis. Hydrolyzes polyunsaturated acyl groups from a unique chloroplast-specific phosphatidylglycerol (PG) that contains 16:1 delta 3-trans as its second acyl group. The polyunsaturated acyl groups released by PLIP1 are exported from the chloroplast, reincorporated into phosphatidylcholine (PC), and ultimately enter seed triacylglycerol (TAG). In vitro, possesses broad substrate specificity. Can hydrolyze the galactolipid monogalactosyldiacylglycerol (MGDG), and the phoshpolipids phosphatidylcholine (PC), phosphatidylethanolamine (PE), phosphatidic acid (PA), phosphatidylserine (PS) phosphatidylglycerol (PG) and phosphatidylinositol (PI). The protein is Phospholipase A1 PLIP1, chloroplastic of Arabidopsis thaliana (Mouse-ear cress).